The sequence spans 224 residues: MMMNGQKLAPAAEVAVQLPESKVAADNISGTMSGPLVGASGGGTTAAMRPFGRKAEVMHVLLRLLCIITSVAALSFMFTAQQSSTISIYGFMLPVQSKWSFSHSFEYLVGVSAAVAAHSLLQLLISMSRLLRKSPVIPSRSHAWLIFAGDQVFAYAMISAGAAASGVTNLNRTGIQHTALPNFCKPLQSFCDHVAVSIFFTFTSCFLLAASAVQEVIWLSRSKY.

The Cytoplasmic portion of the chain corresponds to 1–59; that stretch reads MMMNGQKLAPAAEVAVQLPESKVAADNISGTMSGPLVGASGGGTTAAMRPFGRKAEVMH. Residues 60–80 traverse the membrane as a helical segment; that stretch reads VLLRLLCIITSVAALSFMFTA. At 81–106 the chain is on the extracellular side; that stretch reads QQSSTISIYGFMLPVQSKWSFSHSFE. A helical transmembrane segment spans residues 107-127; the sequence is YLVGVSAAVAAHSLLQLLISM. Residues 128–142 lie on the Cytoplasmic side of the membrane; sequence SRLLRKSPVIPSRSH. The chain crosses the membrane as a helical span at residues 143-163; sequence AWLIFAGDQVFAYAMISAGAA. At 164 to 192 the chain is on the extracellular side; it reads ASGVTNLNRTGIQHTALPNFCKPLQSFCD. The N-linked (GlcNAc...) asparagine glycan is linked to asparagine 171. The chain crosses the membrane as a helical span at residues 193–213; the sequence is HVAVSIFFTFTSCFLLAASAV. Residues 214–224 are Cytoplasmic-facing; the sequence is QEVIWLSRSKY.

Belongs to the Casparian strip membrane proteins (CASP) family. In terms of assembly, homodimer and heterodimers.

The protein localises to the cell membrane. In Populus trichocarpa (Western balsam poplar), this protein is CASP-like protein 3A1.